The chain runs to 129 residues: Small ribosomal subunit protein uS11 (129 aa).

This sequence belongs to the universal ribosomal protein uS11 family. Part of the 30S ribosomal subunit. Interacts with proteins S7 and S18. Binds to IF-3.

Its function is as follows. Located on the platform of the 30S subunit, it bridges several disparate RNA helices of the 16S rRNA. Forms part of the Shine-Dalgarno cleft in the 70S ribosome. This chain is Small ribosomal subunit protein uS11, found in Escherichia fergusonii (strain ATCC 35469 / DSM 13698 / CCUG 18766 / IAM 14443 / JCM 21226 / LMG 7866 / NBRC 102419 / NCTC 12128 / CDC 0568-73).